The primary structure comprises 211 residues: Ribonuclease HII (211 aa).

Positions 24 to 211 constitute an RNase H type-2 domain; sequence QLIAGVDEVG…KPVKKALGLD (188 aa). Residues aspartate 30, glutamate 31, and aspartate 122 each coordinate a divalent metal cation.

It belongs to the RNase HII family. The cofactor is Mn(2+). Mg(2+) is required as a cofactor.

The protein resides in the cytoplasm. It carries out the reaction Endonucleolytic cleavage to 5'-phosphomonoester.. Endonuclease that specifically degrades the RNA of RNA-DNA hybrids. In Vibrio parahaemolyticus serotype O3:K6 (strain RIMD 2210633), this protein is Ribonuclease HII.